Consider the following 202-residue polypeptide: Dephospho-CoA kinase (202 aa).

Residues 6 to 202 (KISVTGDPSS…QCFKALKGTI (197 aa)) form the DPCK domain. 14–19 (SSGKTE) is a binding site for ATP.

Belongs to the CoaE family.

The protein localises to the cytoplasm. The enzyme catalyses 3'-dephospho-CoA + ATP = ADP + CoA + H(+). It participates in cofactor biosynthesis; coenzyme A biosynthesis; CoA from (R)-pantothenate: step 5/5. Its function is as follows. Catalyzes the phosphorylation of the 3'-hydroxyl group of dephosphocoenzyme A to form coenzyme A. In Chlamydia trachomatis serovar A (strain ATCC VR-571B / DSM 19440 / HAR-13), this protein is Dephospho-CoA kinase.